The primary structure comprises 431 residues: D-tagatose-1,6-bisphosphate aldolase subunit KbaZ (431 aa).

It belongs to the GatZ/KbaZ family. KbaZ subfamily. In terms of assembly, forms a complex with KbaY.

It participates in carbohydrate metabolism; D-tagatose 6-phosphate degradation; D-glyceraldehyde 3-phosphate and glycerone phosphate from D-tagatose 6-phosphate: step 2/2. Component of the tagatose-1,6-bisphosphate aldolase KbaYZ that is required for full activity and stability of the Y subunit. Could have a chaperone-like function for the proper and stable folding of KbaY. When expressed alone, KbaZ does not show any aldolase activity. This Salmonella arizonae (strain ATCC BAA-731 / CDC346-86 / RSK2980) protein is D-tagatose-1,6-bisphosphate aldolase subunit KbaZ.